The chain runs to 268 residues: MFLVNSFLKGGGGGGGGGGLGGGLGNVLGGLISGAAGGGGGGGGGMGLGGGGGGGGTAMRILGGVISAISEAAAQYNPEPPPPRSHYSNIEANESEEVRQFRKLFVQLAGDDMEVSATELMNILNKVVTRHPDLKTDGFGIDTCRSMVAVMDSDTTGKLGFEEFKYLWNNIKKWQAIYKRFDTDRSGTIGSHELPGAFEAAGFHLNEHLYSMIIRRYADESGNMDFDNFISCLVRLDAMFRAFKSLDKNGTGQIQVNIQEWLQLTMYS.

M1 bears the N-acetylmethionine mark. At S6 the chain carries Phosphoserine. The EF-hand 1; atypical domain maps to 96-130 (EEVRQFRKLFVQLAGDDMEVSATELMNILNKVVTR). A109, D112, E114, E119, D137, D152, D154, T156, K158, and E163 together coordinate Ca(2+). EF-hand domains lie at 139 to 172 (FGID…NNIK), 169 to 204 (NNIK…AGFH), 205 to 233 (LNEH…ISCL), and 234 to 268 (VRLD…TMYS). K179 is modified (N6-acetyllysine). The Ca(2+) site is built by D182, D184, S186, T188, E193, and D225.

As to quaternary structure, homodimer or heterodimer of a large (catalytic) and a small (regulatory) subunit. In presence of calcium, the heterodimer dissociates.

The protein localises to the cytoplasm. It localises to the cell membrane. In terms of biological role, regulatory subunit of the calcium-regulated non-lysosomal thiol-protease which catalyzes limited proteolysis of substrates involved in cytoskeletal remodeling and signal transduction. Essential for embryonic development. This is Calpain small subunit 1 (Capns1) from Mus musculus (Mouse).